We begin with the raw amino-acid sequence, 346 residues long: Low specificity L-threonine aldolase (346 aa).

Position 207 is an N6-(pyridoxal phosphate)lysine (Lys207).

The protein belongs to the threonine aldolase family. Homotetramer. The cofactor is pyridoxal 5'-phosphate.

It catalyses the reaction L-threonine = acetaldehyde + glycine. It carries out the reaction L-allo-threonine = acetaldehyde + glycine. In terms of biological role, catalyzes the cleavage of L-allo-threonine and L-threonine to glycine and acetaldehyde. Can also act on L-erythro-phenylserine, L-threo-phenylserine, L-beta-3,4-methylenedioxyphenylserine and L-beta-3,4-dihydroxyphenylserine. The protein is Low specificity L-threonine aldolase (ltaE) of Pseudomonas sp. (strain NCIMB 10558).